The sequence spans 210 residues: Probable GTP-binding protein EngB (210 aa).

Positions 25–199 (TGIEVAFAGR…RQKLDTWFSE (175 aa)) constitute an EngB-type G domain. Residues 33-40 (GRSNAGKS), 60-64 (GRTQL), 78-81 (DLPG), 145-148 (TKTD), and 178-180 (FSS) each bind GTP. Positions 40 and 62 each coordinate Mg(2+).

It belongs to the TRAFAC class TrmE-Era-EngA-EngB-Septin-like GTPase superfamily. EngB GTPase family. Mg(2+) serves as cofactor.

Its function is as follows. Necessary for normal cell division and for the maintenance of normal septation. This is Probable GTP-binding protein EngB from Escherichia coli O6:K15:H31 (strain 536 / UPEC).